A 141-amino-acid polypeptide reads, in one-letter code: Large ribosomal subunit protein uL16 (141 aa).

Belongs to the universal ribosomal protein uL16 family. In terms of assembly, part of the 50S ribosomal subunit.

Binds 23S rRNA and is also seen to make contacts with the A and possibly P site tRNAs. This chain is Large ribosomal subunit protein uL16, found in Thermus thermophilus (strain ATCC BAA-163 / DSM 7039 / HB27).